A 90-amino-acid chain; its full sequence is Serine-rich and transmembrane domain-containing 2 (90 aa).

A glycan (N-linked (GlcNAc...) asparagine) is linked at asparagine 11. The helical transmembrane segment at 38–58 threads the bilayer; the sequence is YVGLFLSLLAILLILLFTMLL. The segment at 69 to 90 is disordered; the sequence is SDSTESVPQFTDVEMQSRIPTP.

The protein localises to the membrane. The sequence is that of Serine-rich and transmembrane domain-containing 2 from Homo sapiens (Human).